The primary structure comprises 148 residues: Deoxyuridine 5'-triphosphate nucleotidohydrolase (148 aa).

Substrate-binding positions include 68 to 70, Asn81, 85 to 87, and Lys95; these read RSG and TID.

It belongs to the dUTPase family. It depends on Mg(2+) as a cofactor.

It carries out the reaction dUTP + H2O = dUMP + diphosphate + H(+). The protein operates within pyrimidine metabolism; dUMP biosynthesis; dUMP from dCTP (dUTP route): step 2/2. Its function is as follows. This enzyme is involved in nucleotide metabolism: it produces dUMP, the immediate precursor of thymidine nucleotides and it decreases the intracellular concentration of dUTP so that uracil cannot be incorporated into DNA. The polypeptide is Deoxyuridine 5'-triphosphate nucleotidohydrolase (Rickettsia typhi (strain ATCC VR-144 / Wilmington)).